We begin with the raw amino-acid sequence, 251 residues long: PF03932 family protein CutC (251 aa).

Belongs to the CutC family.

It localises to the cytoplasm. In Agrobacterium fabrum (strain C58 / ATCC 33970) (Agrobacterium tumefaciens (strain C58)), this protein is PF03932 family protein CutC.